Consider the following 102-residue polypeptide: Small ribosomal subunit protein uS10 (102 aa).

This sequence belongs to the universal ribosomal protein uS10 family. Part of the 30S ribosomal subunit.

Its function is as follows. Involved in the binding of tRNA to the ribosomes. The protein is Small ribosomal subunit protein uS10 of Myxococcus xanthus (strain DK1622).